Reading from the N-terminus, the 276-residue chain is 3-methyl-2-oxobutanoate hydroxymethyltransferase (276 aa).

Residues Asp44 and Asp83 each contribute to the Mg(2+) site. Residues 44 to 45 (DS), Asp83, and Lys112 contribute to the 3-methyl-2-oxobutanoate site. Glu114 provides a ligand contact to Mg(2+). Residue Glu180 is the Proton acceptor of the active site. The tract at residues 256 to 276 (PTEAQSSRMKPDELSRALNAE) is disordered.

This sequence belongs to the PanB family. In terms of assembly, homodecamer; pentamer of dimers. Requires Mg(2+) as cofactor.

It is found in the cytoplasm. The catalysed reaction is 3-methyl-2-oxobutanoate + (6R)-5,10-methylene-5,6,7,8-tetrahydrofolate + H2O = 2-dehydropantoate + (6S)-5,6,7,8-tetrahydrofolate. Its pathway is cofactor biosynthesis; (R)-pantothenate biosynthesis; (R)-pantoate from 3-methyl-2-oxobutanoate: step 1/2. Functionally, catalyzes the reversible reaction in which hydroxymethyl group from 5,10-methylenetetrahydrofolate is transferred onto alpha-ketoisovalerate to form ketopantoate. This chain is 3-methyl-2-oxobutanoate hydroxymethyltransferase, found in Gluconacetobacter diazotrophicus (strain ATCC 49037 / DSM 5601 / CCUG 37298 / CIP 103539 / LMG 7603 / PAl5).